The following is an 85-amino-acid chain: Elicitor peptide 7 (85 aa).

The propeptide occupies Met-1–Val-62. Residues Asn-66–Asn-85 form a disordered region.

The protein belongs to the brassicaceae elicitor peptide family.

In terms of biological role, elicitor of plant defense. In Arabidopsis thaliana (Mouse-ear cress), this protein is Elicitor peptide 7 (PEP7).